Reading from the N-terminus, the 495-residue chain is MAAVADSVENNGSINLPENENLIPAGFSAAALLDENSGAFPELNQPDSLAAAETTFPDTNDSAEERWPGWPGDCVFRMIVPVTKVGAIIGRKGDFIKKMCEETRARIKVLDGPVNTPDRIVLISGKEEPEAYMSPAMDAVLRVFRRVSGLPDNDDDDVQNAGSVFSSVRLLVASTQAINLIGKQGSLIKSIVENSGASVRILSEEETPFYAAQDERIVDLQGEALKILKALEAIVGHLRRFLVDHTVVPLFEKQYLARVSQTRQEEPLAESKSSLHTISSNLMEPDFSLLARREPLFLERDSRVDSRVQPSGVSIYSQDPVLSARHSPGLARVSSAFVTQVSQTMQIPFSYAEDIIGVEGANIAYIRRRSGATITIKESPHPDQITVEIKGTTSQVQTAEQLIQEFIINHKEPVSVSGGYARIDSGYVPAYPPQLSNRQEPLPSTYMGTEPVQYRPTAYSQLGGPSTYTPTLTGQTYGSEYRPASDVGGYSSYNL.

KH domains are found at residues 73–140, 165–234, and 340–403; these read DCVF…MDAV, FSSV…LEAI, and QVSQ…EQLI. The tract at residues 474–495 is disordered; the sequence is GQTYGSEYRPASDVGGYSSYNL.

Interacts with HUA1 and HEN4. Detected in roots, shoots, leaves, flowers and fruits.

Its subcellular location is the nucleus. Regulates vegetative and gynoecium development. In concert with HUA2, antagonizes FLK by positively regulating FLC probably at transcriptional and post-transcriptional levels, and thus acts as a negative regulator of flowering. The chain is RNA-binding KH domain-containing protein PEPPER from Arabidopsis thaliana (Mouse-ear cress).